The following is a 204-amino-acid chain: FlaA locus 22.9 kDa protein (204 aa).

Residues 115 to 140 (EKTAEDQKKSSEDHTEGSADSKASSE) are disordered.

In Bacillus subtilis (strain 168), this protein is FlaA locus 22.9 kDa protein (ylxF).